The primary structure comprises 239 residues: Peptidyl-tRNA hydrolase (239 aa).

Residue Y14 participates in tRNA binding. The active-site Proton acceptor is H19. Residues F64, N66, and N112 each coordinate tRNA.

It belongs to the PTH family. In terms of assembly, monomer.

The protein localises to the cytoplasm. It catalyses the reaction an N-acyl-L-alpha-aminoacyl-tRNA + H2O = an N-acyl-L-amino acid + a tRNA + H(+). Functionally, hydrolyzes ribosome-free peptidyl-tRNAs (with 1 or more amino acids incorporated), which drop off the ribosome during protein synthesis, or as a result of ribosome stalling. Catalyzes the release of premature peptidyl moieties from peptidyl-tRNA molecules trapped in stalled 50S ribosomal subunits, and thus maintains levels of free tRNAs and 50S ribosomes. The chain is Peptidyl-tRNA hydrolase from Rhizobium meliloti (strain 1021) (Ensifer meliloti).